The chain runs to 622 residues: Apical membrane antigen 1 (622 aa).

Positions 1-24 (MRKLYCVLLLSAFEFTYMINFGRG) are cleaved as a signal peptide. Residues 25–546 (QNYWEHPYQK…EHKPTYDKMK (522 aa)) lie on the Extracellular side of the membrane. Cystine bridges form between Cys149/Cys302, Cys217/Cys247, Cys263/Cys275, Cys320/Cys418, and Cys337/Cys409. Asn162 carries an N-linked (GlcNAc...) asparagine glycan. Residues Asn286, Asn371, Asn421, Asn422, and Asn499 are each glycosylated (N-linked (GlcNAc...) asparagine). Disulfide bonds link Cys443–Cys502, Cys490–Cys507, and Cys492–Cys509. A helical transmembrane segment spans residues 547 to 567 (IIIASSAAVAVLATILMVYLY). Over 568 to 622 (KRKGNAEKYDKMDEPQDYGKSNSRNDEMLDPEASFWGEEKRASHTTPVLMEKPYY) the chain is Cytoplasmic. The tract at residues 577–607 (DKMDEPQDYGKSNSRNDEMLDPEASFWGEEK) is disordered.

This sequence belongs to the apicomplexan parasites AMA1 family.

The protein resides in the membrane. Functionally, involved in parasite invasion of erythrocytes. The polypeptide is Apical membrane antigen 1 (AMA-1) (Plasmodium falciparum (isolate 7G8)).